Here is a 166-residue protein sequence, read N- to C-terminus: EEF1A lysine methyltransferase 1 (166 aa).

This sequence belongs to the class I-like SAM-binding methyltransferase superfamily. EFM5 family.

The protein resides in the cytoplasm. The catalysed reaction is L-lysyl-[protein] + 3 S-adenosyl-L-methionine = N(6),N(6),N(6)-trimethyl-L-lysyl-[protein] + 3 S-adenosyl-L-homocysteine + 3 H(+). In terms of biological role, protein-lysine methyltransferase that selectively catalyzes the trimethylation of EEF1A at 'Lys-79'. This Danio rerio (Zebrafish) protein is EEF1A lysine methyltransferase 1.